We begin with the raw amino-acid sequence, 329 residues long: Cytosolic arginine sensor for mTORC1 subunit 2 (329 aa).

2 ACT domains span residues 72–140 (ADAT…HTLS) and 262–322 (ELWK…HALK).

The protein belongs to the GATS family. In terms of assembly, forms homodimers and heterodimers with CASTOR1. Interacts with the GATOR2 complex which is composed of MIOS, SEC13, SEH1L, WDR24 and WDR59; the interaction is not regulated by arginine.

It localises to the cytoplasm. The protein localises to the cytosol. Its function is as follows. Functions as a negative regulator of the TORC1 signaling pathway through the GATOR complex. As part of homodimers or heterodimers with CASTOR1, directly binds and inhibits the GATOR subcomplex GATOR2 and thereby mTORC1. Does not directly bind arginine, but binding of arginine to CASTOR1 disrupts the interaction of CASTOR2-containing heterodimers with GATOR2 which can in turn activate mTORC1 and the TORC1 signaling pathway. The polypeptide is Cytosolic arginine sensor for mTORC1 subunit 2 (Mus musculus (Mouse)).